The sequence spans 349 residues: MAQSRDTGNPFPDSGELDNPFQDPAVIQHRPSQQYATLDVYNPFENREPPPAYEPPAPAPAPLPPPSAPSVQSSRKLSPTEPRNYGSYSTQASAAAATAELLKKQEELNRKAEELDRRERELQHVALGGAGTRQNNWPPLPSFCPVKPCFFQDISMEIPQEFQKTVSTMYYLWMCSTLALLLNFFACLARFCVDTGSGSGFGLSMLWLLLFTPCSFVCWYRPMYKAFRSDSSFNFFVFFFIFFVQDVFFVLQAIGIPGWGFSGWVTALVVVGSKPAVAVLMLLVALLFTGIAVLGIVMLKRIHSLYRQTGASFQKAQQEFAAGVFSNPAVRTAAANAAAGAAENAFRAP.

The disordered stretch occupies residues 1 to 90; that stretch reads MAQSRDTGNP…EPRNYGSYST (90 aa). Over 1–168 the chain is Cytoplasmic; the sequence is MAQSRDTGNP…PQEFQKTVST (168 aa). Residue Ser32 is modified to Phosphoserine. Thr37 bears the Phosphothreonine mark. Tyr41 and Tyr53 each carry phosphotyrosine. Residues 49–68 are compositionally biased toward pro residues; it reads PPPAYEPPAPAPAPLPPPSA. 2 positions are modified to phosphoserine: Ser74 and Ser78. Phosphotyrosine is present on Tyr85. At Ser87 the chain carries Phosphoserine. 4 helical membrane-spanning segments follow: residues 169–189, 200–220, 236–256, and 277–297; these read MYYL…ACLA, GFGL…VCWY, FVFF…AIGI, and VAVL…LGIV. The Cytoplasmic portion of the chain corresponds to 298–349; it reads MLKRIHSLYRQTGASFQKAQQEFAAGVFSNPAVRTAAANAAAGAAENAFRAP. Lys315 is covalently cross-linked (Glycyl lysine isopeptide (Lys-Gly) (interchain with G-Cter in SUMO1)).

The protein belongs to the SCAMP family. Interacts with NEDD4 and NEDD4L and TSG101. Interacts with RNF126. In terms of processing, monoubiquitinated.

The protein localises to the membrane. Functions in post-Golgi recycling pathways. Acts as a recycling carrier to the cell surface. The sequence is that of Secretory carrier-associated membrane protein 3 (Scamp3) from Mus musculus (Mouse).